We begin with the raw amino-acid sequence, 181 residues long: Regulator of G-protein signaling 5 (181 aa).

Positions 64-180 constitute an RGS domain; that stretch reads SLDKLLQNNY…VRSEFYQEFI (117 aa).

The protein localises to the cytoplasm. The protein resides in the membrane. Inhibits signal transduction by increasing the GTPase activity of G protein alpha subunits thereby driving them into their inactive GDP-bound form. Binds to G(i)-alpha and G(o)-alpha, but not to G(s)-alpha. This Sus scrofa (Pig) protein is Regulator of G-protein signaling 5 (RGS5).